A 366-amino-acid polypeptide reads, in one-letter code: Mitogen-activated protein kinase p38a (366 aa).

A Protein kinase domain is found at 25–312 (YQDLQPVGSG…AEEALSHPYL (288 aa)). ATP contacts are provided by residues 31–39 (VGSGAYGQV) and K54. D154 functions as the Proton acceptor in the catalytic mechanism. The residue at position 184 (T184) is a Phosphothreonine. The short motif at 184 to 186 (TGY) is the TXY element. At Y186 the chain carries Phosphotyrosine.

This sequence belongs to the protein kinase superfamily. CMGC Ser/Thr protein kinase family. MAP kinase subfamily. It depends on Mg(2+) as a cofactor. Dually phosphorylated on Thr-184 and Tyr-186, which activates the enzyme.

Its subcellular location is the nucleus. It carries out the reaction L-seryl-[protein] + ATP = O-phospho-L-seryl-[protein] + ADP + H(+). It catalyses the reaction L-threonyl-[protein] + ATP = O-phospho-L-threonyl-[protein] + ADP + H(+). Activated by threonine and tyrosine phosphorylation by Mkk3 in response to environmental stress. Its function is as follows. Kinase involved in a signal transduction pathway. May down-regulate insect immunity gene expression after prolonged infection. This is Mitogen-activated protein kinase p38a from Drosophila melanogaster (Fruit fly).